The following is a 121-amino-acid chain: Protein TusC (121 aa).

Belongs to the DsrF/TusC family. Heterohexamer, formed by a dimer of trimers. The hexameric TusBCD complex contains 2 copies each of TusB, TusC and TusD. The TusBCD complex interacts with TusE.

It localises to the cytoplasm. Its function is as follows. Part of a sulfur-relay system required for 2-thiolation of 5-methylaminomethyl-2-thiouridine (mnm(5)s(2)U) at tRNA wobble positions. The polypeptide is Protein TusC (Yersinia enterocolitica serotype O:8 / biotype 1B (strain NCTC 13174 / 8081)).